We begin with the raw amino-acid sequence, 461 residues long: PTS system sucrose-specific EIIBC component (461 aa).

One can recognise a PTS EIIB type-1 domain in the interval Lys-4 to Glu-87. Catalysis depends on Cys-26, which acts as the Phosphocysteine intermediate; for EIIB activity. The PTS EIIC type-1 domain occupies Lys-107–Lys-461. Transmembrane regions (helical) follow at residues Ile-112–Met-132, Leu-148–Ala-168, Leu-178–Ala-198, Phe-208–Val-228, Leu-248–Gly-268, Ala-289–Val-309, Leu-329–Phe-349, Ile-359–Val-379, Phe-387–Ala-407, and Leu-430–Val-450.

Its subcellular location is the cell membrane. The enzyme catalyses N(pros)-phospho-L-histidyl-[protein](out) + sucrose = sucrose 6(G)-phosphate(in) + L-histidyl-[protein]. Functionally, the phosphoenolpyruvate-dependent sugar phosphotransferase system (sugar PTS), a major carbohydrate active transport system, catalyzes the phosphorylation of incoming sugar substrates concomitantly with their translocation across the cell membrane. This system is involved in sucrose transport. In Bacillus subtilis (strain 168), this protein is PTS system sucrose-specific EIIBC component (sacP).